Reading from the N-terminus, the 212-residue chain is Protein-L-isoaspartate O-methyltransferase (212 aa).

Residue S60 is part of the active site.

It belongs to the methyltransferase superfamily. L-isoaspartyl/D-aspartyl protein methyltransferase family.

The protein localises to the cytoplasm. The enzyme catalyses [protein]-L-isoaspartate + S-adenosyl-L-methionine = [protein]-L-isoaspartate alpha-methyl ester + S-adenosyl-L-homocysteine. In terms of biological role, catalyzes the methyl esterification of L-isoaspartyl residues in peptides and proteins that result from spontaneous decomposition of normal L-aspartyl and L-asparaginyl residues. It plays a role in the repair and/or degradation of damaged proteins. The protein is Protein-L-isoaspartate O-methyltransferase of Methanococcus maripaludis (strain C5 / ATCC BAA-1333).